A 246-amino-acid polypeptide reads, in one-letter code: ATP synthase subunit a (246 aa).

Positions 1–3 (MFY) are cleaved as a propeptide — removed in mature form. The next 7 helical transmembrane spans lie at 21 to 41 (LTFS…IIIF), 56 to 76 (WGVS…GQIG), 82 to 102 (YFPL…ISMI), 113 to 133 (VAVV…GLYL), 138 to 158 (FFAL…LVLI), 184 to 204 (LMLI…LGFV), and 206 to 226 (GIIP…IAII).

This sequence belongs to the ATPase A chain family. F-type ATPases have 2 components, CF(1) - the catalytic core - and CF(0) - the membrane proton channel. CF(1) has five subunits: alpha(3), beta(3), gamma(1), delta(1), epsilon(1). CF(0) has three main subunits: a, b and c.

It localises to the mitochondrion inner membrane. Mitochondrial membrane ATP synthase (F(1)F(0) ATP synthase or Complex V) produces ATP from ADP in the presence of a proton gradient across the membrane which is generated by electron transport complexes of the respiratory chain. F-type ATPases consist of two structural domains, F(1) - containing the extramembraneous catalytic core and F(0) - containing the membrane proton channel, linked together by a central stalk and a peripheral stalk. During catalysis, ATP synthesis in the catalytic domain of F(1) is coupled via a rotary mechanism of the central stalk subunits to proton translocation. Key component of the proton channel; it may play a direct role in the translocation of protons across the membrane. The sequence is that of ATP synthase subunit a (ATP6) from Candida parapsilosis (Yeast).